Here is a 926-residue protein sequence, read N- to C-terminus: Isoleucine--tRNA ligase (926 aa).

Positions 57–67 (PYANGNIHMGH) match the 'HIGH' region motif. Glutamate 555 provides a ligand contact to L-isoleucyl-5'-AMP. A 'KMSKS' region motif is present at residues 596 to 600 (KMSKS). Residue lysine 599 participates in ATP binding. Residues cysteine 897, cysteine 900, cysteine 914, and cysteine 917 each coordinate Zn(2+).

The protein belongs to the class-I aminoacyl-tRNA synthetase family. IleS type 1 subfamily. As to quaternary structure, monomer. It depends on Zn(2+) as a cofactor.

The protein localises to the cytoplasm. The catalysed reaction is tRNA(Ile) + L-isoleucine + ATP = L-isoleucyl-tRNA(Ile) + AMP + diphosphate. Its function is as follows. Catalyzes the attachment of isoleucine to tRNA(Ile). As IleRS can inadvertently accommodate and process structurally similar amino acids such as valine, to avoid such errors it has two additional distinct tRNA(Ile)-dependent editing activities. One activity is designated as 'pretransfer' editing and involves the hydrolysis of activated Val-AMP. The other activity is designated 'posttransfer' editing and involves deacylation of mischarged Val-tRNA(Ile). This chain is Isoleucine--tRNA ligase, found in Natranaerobius thermophilus (strain ATCC BAA-1301 / DSM 18059 / JW/NM-WN-LF).